A 29-amino-acid chain; its full sequence is MDMVSLAWAALMVVFTFSLSLVVWGRSGL.

A helical membrane pass occupies residues 3–23; it reads MVSLAWAALMVVFTFSLSLVV.

This sequence belongs to the PetN family. As to quaternary structure, the 4 large subunits of the cytochrome b6-f complex are cytochrome b6, subunit IV (17 kDa polypeptide, PetD), cytochrome f and the Rieske protein, while the 4 small subunits are PetG, PetL, PetM and PetN. The complex functions as a dimer.

The protein localises to the plastid. It is found in the chloroplast thylakoid membrane. Its function is as follows. Component of the cytochrome b6-f complex, which mediates electron transfer between photosystem II (PSII) and photosystem I (PSI), cyclic electron flow around PSI, and state transitions. The sequence is that of Cytochrome b6-f complex subunit 8 from Cucumis sativus (Cucumber).